A 301-amino-acid polypeptide reads, in one-letter code: rRNA methyltransferase 1, mitochondrial (301 aa).

Residues Met1 to Glu11 constitute a mitochondrion transit peptide. The tract at residues Tyr121–Ser141 is disordered.

This sequence belongs to the class IV-like SAM-binding methyltransferase superfamily. RNA methyltransferase TrmH family.

It localises to the mitochondrion. The catalysed reaction is a guanosine in 21S rRNA + S-adenosyl-L-methionine = a 2'-O-methylguanosine in 21S rRNA + S-adenosyl-L-homocysteine + H(+). Functionally, S-adenosyl-L-methionine-dependent 2'-O-ribose methyltransferase that catalyzes the formation of the 2'-O-methylguanosine corresponding to position 2270 in S.cerevisiae 21S mitochondrial large subunit ribosomal RNA (mtLSU rRNA), a universally conserved modification in the peptidyl transferase domain of the mtLSU rRNA. The chain is rRNA methyltransferase 1, mitochondrial from Schizosaccharomyces pombe (strain 972 / ATCC 24843) (Fission yeast).